Reading from the N-terminus, the 379-residue chain is tRNA-specific 2-thiouridylase MnmA (379 aa).

ATP-binding positions include 9 to 16 and Met-35; that span reads AMSGGVDS. The segment at 94–96 is interaction with target base in tRNA; the sequence is NPD. Catalysis depends on Cys-99, which acts as the Nucleophile. Cysteines 99 and 195 form a disulfide. Gly-123 provides a ligand contact to ATP. The interval 145–147 is interaction with tRNA; it reads KDQ. Residue Cys-195 is the Cysteine persulfide intermediate of the active site. The segment at 307–308 is interaction with tRNA; sequence RY.

The protein belongs to the MnmA/TRMU family.

The protein resides in the cytoplasm. The catalysed reaction is S-sulfanyl-L-cysteinyl-[protein] + uridine(34) in tRNA + AH2 + ATP = 2-thiouridine(34) in tRNA + L-cysteinyl-[protein] + A + AMP + diphosphate + H(+). Catalyzes the 2-thiolation of uridine at the wobble position (U34) of tRNA, leading to the formation of s(2)U34. The protein is tRNA-specific 2-thiouridylase MnmA of Xylella fastidiosa (strain M12).